The sequence spans 174 residues: Shikimate kinase (174 aa).

15-20 (GTGKST) lines the ATP pocket. Serine 19 lines the Mg(2+) pocket. Residues aspartate 37, arginine 61, and glycine 82 each coordinate substrate. Position 120 (arginine 120) interacts with ATP. Substrate is bound at residue arginine 138.

It belongs to the shikimate kinase family. Monomer. The cofactor is Mg(2+).

It localises to the cytoplasm. It catalyses the reaction shikimate + ATP = 3-phosphoshikimate + ADP + H(+). Its pathway is metabolic intermediate biosynthesis; chorismate biosynthesis; chorismate from D-erythrose 4-phosphate and phosphoenolpyruvate: step 5/7. Functionally, catalyzes the specific phosphorylation of the 3-hydroxyl group of shikimic acid using ATP as a cosubstrate. The polypeptide is Shikimate kinase (Staphylococcus aureus (strain MSSA476)).